We begin with the raw amino-acid sequence, 452 residues long: Friend leukemia integration 1 transcription factor (452 aa).

S39 is modified (phosphoserine). The PNT domain occupies 112–198 (PPPPNMTTNE…SHLTYLRESS (87 aa)). Residues 202–214 (YNTTSHTDPSSRL) show a composition bias toward polar residues. Positions 202 to 272 (YNTTSHTDPS…YQILGPTSSR (71 aa)) are disordered. Over residues 215–226 (NVKEDPSYDSVR) the composition is skewed to basic and acidic residues. Residues 248-257 (QTMSKNTEQR) are compositionally biased toward polar residues. A DNA-binding region (ETS) is located at residues 281 to 361 (IQLWQFLLEL…HGKRYAYKFD (81 aa)).

It belongs to the ETS family. As to quaternary structure, can form homodimers or heterodimers with ETV6/TEL1.

It localises to the nucleus. In terms of biological role, sequence-specific transcriptional activator. Recognizes the DNA sequence 5'-C[CA]GGAAGT-3'. In Bos taurus (Bovine), this protein is Friend leukemia integration 1 transcription factor (FLI1).